Consider the following 959-residue polypeptide: E3 ubiquitin-protein ligase arkadia-B (959 aa).

Residues 51 to 66 (CSDTNKQQSDLNSNGT) show a composition bias toward polar residues. Disordered regions lie at residues 51–171 (CSDT…VSSL), 189–212 (RKRF…MLQR), and 225–271 (LLPS…SGGM). Positions 112–131 (SSFSDCISSPSSSSHFGDSD) are enriched in low complexity. Over residues 142-156 (PLSSVNSTPRTQSAR) the composition is skewed to polar residues. Residues 228 to 246 (SSSSSSENDLSSESSSSSS) are compositionally biased toward low complexity. A compositionally biased stretch (polar residues) spans 256-267 (TGENRQDGTTLP). Residues 275–279 (VVVIE) carry the SUMO interaction motif 1 (SIM) motif. Residues 300 to 306 (EVEIVTV) carry the SUMO interaction motif 2 (SIM) motif. Positions 318–341 (HPRSHWGQNSQSGRTQEQRTRNRV) are disordered. Polar residues predominate over residues 323–332 (WGQNSQSGRT). The short motif at 355-359 (VVDLT) is the SUMO interaction motif 3 (SIM) element. The segment covering 370 to 397 (TTSGRVESQPVSIVSSLTSTSEPASDSM) has biased composition (polar residues). Disordered stretches follow at residues 370 to 399 (TTSG…SMSG), 475 to 499 (HFPH…SFRD), 615 to 649 (PRPL…MDYV), and 661 to 680 (PSLT…HLSA). Basic residues predominate over residues 475 to 487 (HFPHHHHHHHHSS). Over residues 620–632 (HQTSSCPHSNSAS) the composition is skewed to polar residues. The span at 633 to 646 (QPPPPPPPPPPPPM) shows a compositional bias: pro residues. Residues 872–874 (YPH) form a ubiquitin binding region. Positions 907 and 910 each coordinate Zn(2+). The RING-type; atypical zinc-finger motif lies at 907–948 (CTICLSILEEGEDVRRLPCMHLFHQVCVDQWLITNKKCPICR). The interval 922 to 926 (RLPCM) is ubiquitin binding. Residues His930 and Cys933 each coordinate Zn(2+).

The protein belongs to the Arkadia family. In terms of assembly, monomer.

The protein resides in the nucleus. It is found in the cytoplasm. The protein localises to the PML body. It catalyses the reaction S-ubiquitinyl-[E2 ubiquitin-conjugating enzyme]-L-cysteine + [acceptor protein]-L-lysine = [E2 ubiquitin-conjugating enzyme]-L-cysteine + N(6)-ubiquitinyl-[acceptor protein]-L-lysine.. It functions in the pathway protein modification; protein ubiquitination. Its activity is regulated as follows. Binds free ubiquitin non-covalently via its RING-type zinc finger. Ubiquitin-binding leads to enhance the E3 ubiquitin-protein ligase activity by stabilizing the ubiquitin-conjugating enzyme E2 (donor ubiquitin) in the 'closed' conformation and activating ubiquitin transfer. In terms of biological role, E3 ubiquitin-protein ligase required for mesoderm patterning during embryonic development. Acts as an enhancer of the transcriptional responses of the smad2/smad3 effectors, which are activated downstream of BMP. Acts by mediating ubiquitination and degradation of SMAD inhibitors such as smad7, inducing their proteasomal degradation and thereby enhancing the transcriptional activity of TGF-beta and BMP. Specifically binds polysumoylated chains via SUMO interaction motifs (SIMs) and mediates ubiquitination of sumoylated substrates. The regulation of the BMP-SMAD signaling is however independent of sumoylation and is not dependent of SUMO interaction motifs (SIMs). This is E3 ubiquitin-protein ligase arkadia-B (rnf111-b) from Xenopus laevis (African clawed frog).